The following is a 579-amino-acid chain: 2-succinyl-5-enolpyruvyl-6-hydroxy-3-cyclohexene-1-carboxylate synthase (579 aa).

It belongs to the TPP enzyme family. MenD subfamily. As to quaternary structure, homodimer. The cofactor is Mg(2+). Requires Mn(2+) as cofactor. It depends on thiamine diphosphate as a cofactor.

The enzyme catalyses isochorismate + 2-oxoglutarate + H(+) = 5-enolpyruvoyl-6-hydroxy-2-succinyl-cyclohex-3-ene-1-carboxylate + CO2. Its pathway is quinol/quinone metabolism; 1,4-dihydroxy-2-naphthoate biosynthesis; 1,4-dihydroxy-2-naphthoate from chorismate: step 2/7. The protein operates within quinol/quinone metabolism; menaquinone biosynthesis. In terms of biological role, catalyzes the thiamine diphosphate-dependent decarboxylation of 2-oxoglutarate and the subsequent addition of the resulting succinic semialdehyde-thiamine pyrophosphate anion to isochorismate to yield 2-succinyl-5-enolpyruvyl-6-hydroxy-3-cyclohexene-1-carboxylate (SEPHCHC). The sequence is that of 2-succinyl-5-enolpyruvyl-6-hydroxy-3-cyclohexene-1-carboxylate synthase from Shewanella frigidimarina (strain NCIMB 400).